The chain runs to 360 residues: DNA integrity scanning protein DisA (360 aa).

Residues 9–147 (DNDLMDILNI…NNIKYVLRDS (139 aa)) enclose the DAC domain. Residues Gly-76, Leu-94, and 107–111 (TRHRT) contribute to the ATP site.

The protein belongs to the DisA family. As to quaternary structure, homooctamer. Requires Mg(2+) as cofactor.

The catalysed reaction is 2 ATP = 3',3'-c-di-AMP + 2 diphosphate. Functionally, participates in a DNA-damage check-point that is active prior to asymmetric division when DNA is damaged. DisA forms globular foci that rapidly scan along the chromosomes during sporulation, searching for lesions. When a lesion is present, DisA pauses at the lesion site. This triggers a cellular response that culminates in a temporary block in sporulation initiation. Also has diadenylate cyclase activity, catalyzing the condensation of 2 ATP molecules into cyclic di-AMP (c-di-AMP). c-di-AMP acts as a signaling molecule that couples DNA integrity with progression of sporulation. The rise in c-di-AMP level generated by DisA while scanning the chromosome, operates as a positive signal that advances sporulation; upon encountering a lesion, the DisA focus arrests at the damaged site and halts c-di-AMP synthesis. The chain is DNA integrity scanning protein DisA from Clostridium tetani (strain Massachusetts / E88).